Here is a 338-residue protein sequence, read N- to C-terminus: MDLVALQSLLDNTSFLVLFLTMLLYWGGAAFPNIPGLTGLGTLGVAIANLCMATLLGARWLEAGYFPLSNLYESLFFLAWGVTTMHLVAEWMSRSRWVGVITAPVAMGITAFAALSLPAEMQNSAPLVPALKSNWLMMHVSVMMISYAALLVGSLLAIAFLIVTKGQKIELRGSSVGNGSYRLRQPQNTTDETPVTVVAFQKTEPQSNGNTAVLASPDLQQLTTTPALSPQMLSLADTLDNISYRIIGLGFPLLTIGIIAGAVWANEAWGSYWSWDPKETWALITWLVFAAYLHARITRGWQGRQPAFLAAAGFFVVWVCYLGVNILGKGLHSYGWFF.

The next 8 helical transmembrane spans lie at 15 to 35, 36 to 56, 71 to 91, 97 to 117, 142 to 162, 246 to 266, 273 to 293, and 307 to 327; these read FLVLFLTMLLYWGGAAFPNIP, GLTGLGTLGVAIANLCMATLL, LYESLFFLAWGVTTMHLVAEW, WVGVITAPVAMGITAFAALSL, VMMISYAALLVGSLLAIAFLI, IIGLGFPLLTIGIIAGAVWAN, WSWDPKETWALITWLVFAAYL, and AFLAAAGFFVVWVCYLGVNIL.

The protein belongs to the CcmF/CycK/Ccl1/NrfE/CcsA family. In terms of assembly, may interact with ccs1.

The protein localises to the cellular thylakoid membrane. Functionally, required during biogenesis of c-type cytochromes (cytochrome c6 and cytochrome f) at the step of heme attachment. In Picosynechococcus sp. (strain ATCC 27264 / PCC 7002 / PR-6) (Agmenellum quadruplicatum), this protein is Cytochrome c biogenesis protein CcsA.